Consider the following 105-residue polypeptide: ATP synthase F(0) complex subunit a (105 aa).

The next 3 membrane-spanning stretches (helical) occupy residues 14–34 (EGTP…SLFI), 47–67 (LTAG…LLPM), and 72–92 (AILT…VAMI).

It belongs to the ATPase A chain family. Component of the ATP synthase complex composed at least of ATP5F1A/subunit alpha, ATP5F1B/subunit beta, ATP5MC1/subunit c (homooctomer), MT-ATP6/subunit a, MT-ATP8/subunit 8, ATP5ME/subunit e, ATP5MF/subunit f, ATP5MG/subunit g, ATP5MK/subunit k, ATP5MJ/subunit j, ATP5F1C/subunit gamma, ATP5F1D/subunit delta, ATP5F1E/subunit epsilon, ATP5PF/subunit F6, ATP5PB/subunit b, ATP5PD/subunit d, ATP5PO/subunit OSCP. ATP synthase complex consists of a soluble F(1) head domain (subunits alpha(3) and beta(3)) - the catalytic core - and a membrane F(0) domain - the membrane proton channel (subunits c, a, 8, e, f, g, k and j). These two domains are linked by a central stalk (subunits gamma, delta, and epsilon) rotating inside the F1 region and a stationary peripheral stalk (subunits F6, b, d, and OSCP). Interacts with DNAJC30; interaction is direct.

It is found in the mitochondrion inner membrane. The catalysed reaction is H(+)(in) = H(+)(out). Functionally, subunit a, of the mitochondrial membrane ATP synthase complex (F(1)F(0) ATP synthase or Complex V) that produces ATP from ADP in the presence of a proton gradient across the membrane which is generated by electron transport complexes of the respiratory chain. ATP synthase complex consist of a soluble F(1) head domain - the catalytic core - and a membrane F(1) domain - the membrane proton channel. These two domains are linked by a central stalk rotating inside the F(1) region and a stationary peripheral stalk. During catalysis, ATP synthesis in the catalytic domain of F(1) is coupled via a rotary mechanism of the central stalk subunits to proton translocation. With the subunit c (ATP5MC1), forms the proton-conducting channel in the F(0) domain, that contains two crucial half-channels (inlet and outlet) that facilitate proton movement from the mitochondrial intermembrane space (IMS) into the matrix. Protons are taken up via the inlet half-channel and released through the outlet half-channel, following a Grotthuss mechanism. This Salmo trutta (Brown trout) protein is ATP synthase F(0) complex subunit a.